A 65-amino-acid chain; its full sequence is uncharacterized protein (65 aa).

The protein localises to the plastid. The protein resides in the chloroplast. This is an uncharacterized protein from Porphyra purpurea (Red seaweed).